The chain runs to 752 residues: Myb-related protein A (752 aa).

Residues 1-22 (MAKRSRSEDEDDDLQYADHDYE) form a disordered region. HTH myb-type domains are found at residues 30 to 81 (KKLW…QKVL), 82 to 137 (NPEL…NPEV), and 138 to 188 (KKSS…RRKV). DNA-binding regions (H-T-H motif) lie at residues 58–81 (WTLI…QKVL), 110–133 (WSLI…HNHL), and 161–184 (WAEI…NSTM). A Glycyl lysine isopeptide (Lys-Gly) (interchain with G-Cter in SUMO2) cross-link involves residue lysine 199. Residues 230 to 295 (IPGYQYVSPE…RIPSQPGSFS (66 aa)) form a transcriptional activation domain region. The tract at residues 298 to 553 (SGSFLMDDNM…IRRSILGTTP (256 aa)) is negative regulatory domain. An N6-acetyllysine modification is found at lysine 394. The interval 451–480 (RKMRVGHSPGSELRDGSLNDGGNMALKHTP) is disordered. Glycyl lysine isopeptide (Lys-Gly) (interchain with G-Cter in SUMO2) cross-links involve residues lysine 592 and lysine 602.

In terms of assembly, component of the DREAM complex (also named LINC complex) at least composed of E2F4, E2F5, LIN9, LIN37, LIN52, LIN54, MYBL1, MYBL2, RBL1, RBL2, RBBP4, TFDP1 and TFDP2. The complex exists in quiescent cells where it represses cell cycle-dependent genes. It dissociates in S phase when LIN9, LIN37, LIN52 and LIN54 form a subcomplex that binds to MYBL2. As to expression, expressed in a variety of lymphoid and solid tumor lines cultured in vitro.

Its subcellular location is the nucleus. Functionally, transcription factor that specifically recognizes the sequence 5'-YAAC[GT]G-3'. Acts as a master regulator of male meiosis by promoting expression of piRNAs: activates expression of both piRNA precursor RNAs and expression of protein-coding genes involved in piRNA metabolism. The piRNA metabolic process mediates the repression of transposable elements during meiosis by forming complexes composed of piRNAs and Piwi proteins and governs the methylation and subsequent repression of transposons, which is essential for the germline integrity. Transcriptional activator of SOX30. The sequence is that of Myb-related protein A (MYBL1) from Homo sapiens (Human).